The primary structure comprises 618 residues: UvrABC system protein C (618 aa).

Residues 19–97 (SEPGIYRMLD…IKALRPKYNV (79 aa)) enclose the GIY-YIG domain. Residues 208–243 (QIILDELAERMKNAVSQLNFEEAAVLRDQIKNLRLI) enclose the UVR domain.

It belongs to the UvrC family. Interacts with UvrB in an incision complex.

It localises to the cytoplasm. Functionally, the UvrABC repair system catalyzes the recognition and processing of DNA lesions. UvrC both incises the 5' and 3' sides of the lesion. The N-terminal half is responsible for the 3' incision and the C-terminal half is responsible for the 5' incision. The chain is UvrABC system protein C from Legionella pneumophila (strain Lens).